The primary structure comprises 175 residues: Crossover junction endodeoxyribonuclease RuvC (175 aa).

Active-site residues include aspartate 16, glutamate 76, and aspartate 148. The Mg(2+) site is built by aspartate 16, glutamate 76, and aspartate 148.

The protein belongs to the RuvC family. As to quaternary structure, homodimer which binds Holliday junction (HJ) DNA. The HJ becomes 2-fold symmetrical on binding to RuvC with unstacked arms; it has a different conformation from HJ DNA in complex with RuvA. In the full resolvosome a probable DNA-RuvA(4)-RuvB(12)-RuvC(2) complex forms which resolves the HJ. The cofactor is Mg(2+).

It is found in the cytoplasm. The enzyme catalyses Endonucleolytic cleavage at a junction such as a reciprocal single-stranded crossover between two homologous DNA duplexes (Holliday junction).. Functionally, the RuvA-RuvB-RuvC complex processes Holliday junction (HJ) DNA during genetic recombination and DNA repair. Endonuclease that resolves HJ intermediates. Cleaves cruciform DNA by making single-stranded nicks across the HJ at symmetrical positions within the homologous arms, yielding a 5'-phosphate and a 3'-hydroxyl group; requires a central core of homology in the junction. The consensus cleavage sequence is 5'-(A/T)TT(C/G)-3'. Cleavage occurs on the 3'-side of the TT dinucleotide at the point of strand exchange. HJ branch migration catalyzed by RuvA-RuvB allows RuvC to scan DNA until it finds its consensus sequence, where it cleaves and resolves the cruciform DNA. The polypeptide is Crossover junction endodeoxyribonuclease RuvC (Bradyrhizobium sp. (strain ORS 278)).